We begin with the raw amino-acid sequence, 171 residues long: UPF0312 protein SAV2687 (171 aa).

The protein belongs to the UPF0312 family.

The chain is UPF0312 protein SAV2687 from Staphylococcus aureus (strain Mu50 / ATCC 700699).